The following is a 1958-amino-acid chain: Callose synthase 7 (1958 aa).

A disordered region spans residues 1–29 (MASTSSGGRGEDGRPPQMQPVRSMSRKMT). Over 1 to 504 (MASTSSGGRG…LYRSFDRMWM (504 aa)) the chain is Cytoplasmic. Residues 505–525 (FLVLSLQTMIIVAWHPSGSIL) form a helical membrane-spanning segment. Topologically, residues 526–535 (AIFTEDVFRN) are extracellular. The chain crosses the membrane as a helical span at residues 536-556 (VLTIFITSAFLNLLQATLDLV). The Cytoplasmic portion of the chain corresponds to 557-569 (LSFGAWKSLKFSQ). The helical transmembrane segment at 570 to 590 (IMRYITKFLMAAMWAIMLPIT) threads the bilayer. The Extracellular segment spans residues 591–620 (YSKSVQNPTGLIKFFSSWVGSWLHRSLYDY). The helical transmembrane segment at 621-641 (AIALYVLPNILAAVFFLLPPL) threads the bilayer. Residues 642-673 (RRIMERSNMRIVTLIMWWAQPKLYIGRGMHEE) lie on the Cytoplasmic side of the membrane. The chain crosses the membrane as a helical span at residues 674–694 (MFALFKYTFFWVMLLLSKLAF). Residues 695 to 730 (SYYVEILPLVNPTKLIWDMHVVNYEWHEFFPNATHN) are Extracellular-facing. A helical membrane pass occupies residues 731 to 751 (IGVIIAIWGPIVLVYFMDTQI). Topologically, residues 752-1496 (WYAIFSTLFG…FDFYRMLSFY (745 aa)) are cytoplasmic. Residues 1497–1517 (FTTVGFYFSSMITVLTVYVFL) traverse the membrane as a helical segment. Residues 1518-1547 (YGRLYLVLSGLEKNILQSASVHESNALEQA) lie on the Extracellular side of the membrane. The helical transmembrane segment at 1548–1568 (LAAQSVFQLGFLMVLPMVMEI) threads the bilayer. The Cytoplasmic segment spans residues 1569–1576 (GLEKGFRT). The chain crosses the membrane as a helical span at residues 1577–1597 (ALGDFIIMQLQLASVFFTFQL). Topologically, residues 1598 to 1640 (GTKAHYFGRTILHGGSKYRATGRGFVVFHAKFAENYRLYSRSH) are extracellular. Residues 1641-1661 (FVKGLELVILLVVYQVYGTSY) form a helical membrane-spanning segment. The Cytoplasmic segment spans residues 1662–1667 (RSSSTY). The helical transmembrane segment at 1668–1688 (MYITFSMWFLVTSWLFAPFIF) threads the bilayer. Topologically, residues 1689 to 1742 (NPSGFEWQKTVDDWTDWKRWMGNRGGIGIVLDKSWESWWDIEQEHLKHTNLRGR) are extracellular. The helical transmembrane segment at 1743–1763 (VLEILLALRFLLYQYGIVYHL) threads the bilayer. Over 1764–1771 (NIARRHTT) the chain is Cytoplasmic. A helical transmembrane segment spans residues 1772-1792 (FLVYGLSWAILLSVLLVLKMV). The Extracellular portion of the chain corresponds to 1793-1812 (SMGRRKFGTDFQVMFRILKA). The helical transmembrane segment at 1813 to 1833 (LLFLGFLSVMTVLFVVCGLTI) threads the bilayer. Residues 1834-1835 (SD) are Cytoplasmic-facing. The helical transmembrane segment at 1836 to 1856 (LFASILAFLPTGWAILLIGQA) threads the bilayer. The Extracellular segment spans residues 1857–1878 (LRSVFKGLGFWDSVKELGRAYE). The helical transmembrane segment at 1879–1899 (YIMGLVIFTPIAVLSWFPFVS) threads the bilayer. Residues 1900-1958 (EFQTRLLFNQAFSRGLQISMILAGKKDKETPSTKYLGHTEESFGLEHDTNTFNHYYLWT) lie on the Cytoplasmic side of the membrane.

Belongs to the glycosyltransferase 48 family.

Its subcellular location is the cell membrane. It catalyses the reaction [(1-&gt;3)-beta-D-glucosyl](n) + UDP-alpha-D-glucose = [(1-&gt;3)-beta-D-glucosyl](n+1) + UDP + H(+). Involved in callose synthesis at the forming cell plate during cytokinesis. During plant growth and development, callose is found as a transitory component of the cell plate in dividing cells, is a major component of pollen mother cell walls and pollen tubes, and is found as a structural component of plasmodesmatal canals. In Arabidopsis thaliana (Mouse-ear cress), this protein is Callose synthase 7 (CALS7).